The primary structure comprises 456 residues: Bifunctional protein GlmU (456 aa).

Residues 1 to 228 (MPQNTLNIVI…SHLAAGVNNK (228 aa)) form a pyrophosphorylase region. Residues 11–14 (LAAG), Lys-25, Gln-75, 80–81 (GT), 102–104 (YGD), Gly-138, Glu-153, Asn-168, and Asn-226 contribute to the UDP-N-acetyl-alpha-D-glucosamine site. Asp-104 lines the Mg(2+) pocket. Position 226 (Asn-226) interacts with Mg(2+). The interval 229 to 249 (LQLTELERIFQTEQAQELLKA) is linker. Residues 250–456 (GVTLRDPARF…GWVRPEKDKQ (207 aa)) are N-acetyltransferase. 2 residues coordinate UDP-N-acetyl-alpha-D-glucosamine: Arg-332 and Lys-350. The Proton acceptor role is filled by His-362. Residues Tyr-365 and Asn-376 each contribute to the UDP-N-acetyl-alpha-D-glucosamine site. Residues Ala-379, 385–386 (NY), Ser-404, Ala-422, and Arg-439 each bind acetyl-CoA.

This sequence in the N-terminal section; belongs to the N-acetylglucosamine-1-phosphate uridyltransferase family. It in the C-terminal section; belongs to the transferase hexapeptide repeat family. Homotrimer. Mg(2+) serves as cofactor.

It localises to the cytoplasm. It carries out the reaction alpha-D-glucosamine 1-phosphate + acetyl-CoA = N-acetyl-alpha-D-glucosamine 1-phosphate + CoA + H(+). The catalysed reaction is N-acetyl-alpha-D-glucosamine 1-phosphate + UTP + H(+) = UDP-N-acetyl-alpha-D-glucosamine + diphosphate. It participates in nucleotide-sugar biosynthesis; UDP-N-acetyl-alpha-D-glucosamine biosynthesis; N-acetyl-alpha-D-glucosamine 1-phosphate from alpha-D-glucosamine 6-phosphate (route II): step 2/2. The protein operates within nucleotide-sugar biosynthesis; UDP-N-acetyl-alpha-D-glucosamine biosynthesis; UDP-N-acetyl-alpha-D-glucosamine from N-acetyl-alpha-D-glucosamine 1-phosphate: step 1/1. It functions in the pathway bacterial outer membrane biogenesis; LPS lipid A biosynthesis. Catalyzes the last two sequential reactions in the de novo biosynthetic pathway for UDP-N-acetylglucosamine (UDP-GlcNAc). The C-terminal domain catalyzes the transfer of acetyl group from acetyl coenzyme A to glucosamine-1-phosphate (GlcN-1-P) to produce N-acetylglucosamine-1-phosphate (GlcNAc-1-P), which is converted into UDP-GlcNAc by the transfer of uridine 5-monophosphate (from uridine 5-triphosphate), a reaction catalyzed by the N-terminal domain. This chain is Bifunctional protein GlmU, found in Neisseria meningitidis serogroup B (strain ATCC BAA-335 / MC58).